The following is a 113-amino-acid chain: Nucleoid-associated protein Cthe_2143 (113 aa).

This sequence belongs to the YbaB/EbfC family. As to quaternary structure, homodimer.

Its subcellular location is the cytoplasm. It is found in the nucleoid. Functionally, binds to DNA and alters its conformation. May be involved in regulation of gene expression, nucleoid organization and DNA protection. This is Nucleoid-associated protein Cthe_2143 from Acetivibrio thermocellus (strain ATCC 27405 / DSM 1237 / JCM 9322 / NBRC 103400 / NCIMB 10682 / NRRL B-4536 / VPI 7372) (Clostridium thermocellum).